A 293-amino-acid chain; its full sequence is tRNA-cytidine(32) 2-sulfurtransferase (293 aa).

The PP-loop motif signature appears at 62-67; sequence SGGKDS. [4Fe-4S] cluster is bound by residues C137, C140, and C228.

The protein belongs to the TtcA family. As to quaternary structure, homodimer. The cofactor is Mg(2+). It depends on [4Fe-4S] cluster as a cofactor.

Its subcellular location is the cytoplasm. It catalyses the reaction cytidine(32) in tRNA + S-sulfanyl-L-cysteinyl-[cysteine desulfurase] + AH2 + ATP = 2-thiocytidine(32) in tRNA + L-cysteinyl-[cysteine desulfurase] + A + AMP + diphosphate + H(+). Its pathway is tRNA modification. Functionally, catalyzes the ATP-dependent 2-thiolation of cytidine in position 32 of tRNA, to form 2-thiocytidine (s(2)C32). The sulfur atoms are provided by the cysteine/cysteine desulfurase (IscS) system. This chain is tRNA-cytidine(32) 2-sulfurtransferase, found in Brucella abortus (strain S19).